A 435-amino-acid chain; its full sequence is Methionine aminopeptidase 2 (435 aa).

Positions Ala-57–Ala-77 are disordered. The span at Ala-65–Ala-77 shows a compositional bias: basic residues. Substrate is bound at residue His-188. Asp-208, Asp-219, and His-288 together coordinate a divalent metal cation. His-296 contributes to the substrate binding site. A divalent metal cation contacts are provided by Glu-321 and Glu-416.

Belongs to the peptidase M24A family. Methionine aminopeptidase eukaryotic type 2 subfamily. Co(2+) serves as cofactor. The cofactor is Zn(2+). Mn(2+) is required as a cofactor. Requires Fe(2+) as cofactor.

Its subcellular location is the cytoplasm. It carries out the reaction Release of N-terminal amino acids, preferentially methionine, from peptides and arylamides.. Its function is as follows. Cotranslationally removes the N-terminal methionine from nascent proteins. The N-terminal methionine is often cleaved when the second residue in the primary sequence is small and uncharged (Met-Ala-, Cys, Gly, Pro, Ser, Thr, or Val). The chain is Methionine aminopeptidase 2 from Clavispora lusitaniae (strain ATCC 42720) (Yeast).